A 776-amino-acid polypeptide reads, in one-letter code: MWIQVRTMDGKETHRVDSLSKLTKVDELRVKIAELFNVEPERQRLFYRGKQMEDGHTIFDYNVGLNDIVQLLVRQAVAATVLPKDKEAELSDSDSGCGSAQSESDKGSTHGESDVQSAGASGQTDTADLIDPGFGFYKINEFVDARDLNMGAWFEAQIVKVTKTPAEDGGAEDIVYHVKYEDYPENGVVQLRGKDVRPRARTVYQWHQLEPGMIVMVNYNPDDPKERGYWYDAEIQRKRETRTQREVFGKILLGDAGDSLNDCRIMFVTEIYKIEEPGSAEGPGASSDSPLKKGSNGPECKVCKDDPKKNCRVCNCHVCGIKQDPDKQLLCDECDMAFHTYCLNPPLTTIPDDEDWYCPDCRNDASEVVLAGEKLKESKKKAKMASASSSSQRDWGKGMACVGRTKQCTIVPSNHYGPVPGVPVGTLWKFRVQVSESGVHRPHVAGIHGRSNDGAYSLVLAGGYEDDVDDGNEFTYTGSGGRDLSGNKRTAEQSCDQKLTNMNRALALNCNAAVNDKEGAEAKDWKAGKPVRVVRSSKGRKHSKYSPEDGNRYDGIYKVVKYWPEKGKSGFLVWRYLLKRNDEESAPWTRDGKERIKKLGLTMQYPEGYLEAVAAKEKEKENKNEDDIEETPTKGKRKRKSQSMEEKSSPTKGTPKKMKVEAYKLSKEQKALIKDDELNKKLWDEAMESLSLGPRFVNKVEEVFLCICCQEVVYQPITTECQHNVCRECLQRSFKAKVYTCPACRHDLGKNYQMAVNKPLQAILTQLFPGYSSGRC.

The region spanning 1 to 78 (MWIQVRTMDG…VQLLVRQAVA (78 aa)) is the Ubiquitin-like domain. Positions 88-126 (AELSDSDSGCGSAQSESDKGSTHGESDVQSAGASGQTDT) are disordered. Polar residues predominate over residues 93–102 (SDSGCGSAQS). Basic and acidic residues predominate over residues 103–113 (ESDKGSTHGES). Residues 114 to 126 (DVQSAGASGQTDT) show a composition bias toward polar residues. Tudor-like regions lie at residues 135–201 (GFYK…PRAR) and 208–277 (QLEP…IEEP). Residues 278–298 (GSAEGPGASSDSPLKKGSNGP) are disordered. The interval 290 to 299 (PLKKGSNGPE) is linker. Residues 297–364 (GPECKVCKDD…DWYCPDCRND (68 aa)) form a PHD-type zinc finger. Histone H3R2me0 binding stretches follow at residues 331 to 335 (CDECD) and 351 to 353 (PDD). The region spanning 417–580 (GPVPGVPVGT…FLVWRYLLKR (164 aa)) is the YDG domain. The tract at residues 443–444 (HV) is required to promote base flipping. DNA is bound by residues 461–462 (AG) and aspartate 467. Required for formation of a 5-methylcytosine-binding pocket stretches follow at residues 464 to 467 (YEDD) and 476 to 479 (YTGS). The disordered stretch occupies residues 617–660 (EKEKENKNEDDIEETPTKGKRKRKSQSMEEKSSPTKGTPKKMKV). The residue at position 649 (serine 649) is a Phosphoserine; by CDK2. Residues 706–745 (CICCQEVVYQPITTECQHNVCRECLQRSFKAKVYTCPACR) form an RING-type zinc finger.

In terms of processing, phosphorylation at Ser-649 is required for gastrulation. As to expression, expressed in proliferating tissues. Highly expressed 24-48 hours after fertilization (hpf) in rapidly proliferating tissues, including the tectum, retina and brachial arches. Preferentially expressed in the liver bud and expression is maintained in the fully developed liver. Also expressed in the proximal gut. In adult, the highest expression is detected in testis.

The protein resides in the nucleus. The protein localises to the cytoplasm. The catalysed reaction is S-ubiquitinyl-[E2 ubiquitin-conjugating enzyme]-L-cysteine + [acceptor protein]-L-lysine = [E2 ubiquitin-conjugating enzyme]-L-cysteine + N(6)-ubiquitinyl-[acceptor protein]-L-lysine.. It functions in the pathway protein modification; protein ubiquitination. In terms of biological role, multidomain protein that acts as a key epigenetic regulator by bridging DNA methylation and chromatin modification. Specifically recognizes and binds hemimethylated DNA at replication forks via its YDG domain and recruits dnmt1 methyltransferase to ensure faithful propagation of the DNA methylation patterns through DNA replication. In addition to its role in maintenance of DNA methylation, also plays a key role in chromatin modification: through its tudor-like regions and PHD-type zinc fingers, specifically recognizes and binds histone H3 trimethylated at 'Lys-9' (H3K9me3) and unmethylated at 'Arg-2' (H3R2me0), respectively, and recruits chromatin proteins. Enriched in pericentric heterochromatin where it recruits different chromatin modifiers required for this chromatin replication. Also localizes to euchromatic regions where it negatively regulates transcription possibly by impacting DNA methylation and histone modifications. Has E3 ubiquitin-protein ligase activity by mediating the ubiquitination of target proteins. However, it is still unclear how E3 ubiquitin-protein ligase activity is related to its role in chromatin in vivo. Required for pregastrula and lens development. This Danio rerio (Zebrafish) protein is E3 ubiquitin-protein ligase UHRF1 (uhrf1).